The chain runs to 833 residues: MASKRKAAAMNAAAAEEPVDPSDELMFLCLGGGNEVGRSCHIIQYKGKTVMLDAGQHPAYDGLAALPFYDDFDLSTVDVLLISHFHIDHAASLPYVLAKTNFRGRVFMTHPTKAIYKWLIQDSVRVGNTSSNPTTQPVYTEQDHLNTFPQIEAIDYHTTHTISSIRITPYPAGHVLGAAMFLIEIAGLNIFFTGDYSREQDRHLVSAEVPKGVKIDVLITESTYGIASHVPRLEREQALMKSITSILNRGGRVLMPVFALGRAQELLLILDEYWGKHADFQKYPIYYASNLARKCMLIYQTYVGAMNDNIKRLFRERMAEAEASGDGAGKGGPWDFKYIRSLKNLDRFDDVGGCVMLASPGMLQNGVSRELLERWAPSEKNGVIITGYSVEGTMAKQIMQEPDQIQAVMSRSMAGARRMPGGDGEKVLIPRRCSVQEYSFAAHVDGVENREFIEEVQAPVVILVHGEQHNMMRLKSKLLSLNANKTAKVKVYSPRNCEELRIPFKADKIAKVVGKLACIQPPQSIHPDQTATPPLVTGVLVQNDFKLSLMAPEDLREYAGLNTTTITCKQRLTLSAAGVDLVKWALEGTFGNIEELPEMRRAKNGQNGHADKMITDGDDESKQEDADEEVASLVAAYLVMGCVSVRYRTNGEVELEWEGNMLNDGIADSVMAVLFSVESSPAAVKRSSAKHSHSHDLPEVNPHHSATPEERLERLLWFLEAQFGQDNVAPVTTPKLPPLEDVDDKNKNEGEDEDAMKTDEDGEDAQLQERQQKEIERLHKIGIPVPGVSIKVDKMSATVWLEDLEVESSHKVFADRVRAVVERAIEVTAPLWG.

Zn(2+) contacts are provided by His-84, His-86, Asp-88, His-89, His-174, and Asp-195. The Proton donor role is filled by His-443. His-465 lines the Zn(2+) pocket. Disordered regions lie at residues Arg-600–Glu-624, Lys-685–Thr-707, and Val-728–Leu-767. Basic and acidic residues-rich tracts occupy residues Ser-694 to Thr-707 and Asp-744 to Asp-759.

This sequence belongs to the metallo-beta-lactamase superfamily. RNA-metabolizing metallo-beta-lactamase-like family. CPSF2/YSH1 subfamily.

The protein localises to the nucleus. In terms of biological role, component of the cleavage factor I (CF I) involved in pre-mRNA 3'-end processing. This Gibberella zeae (strain ATCC MYA-4620 / CBS 123657 / FGSC 9075 / NRRL 31084 / PH-1) (Wheat head blight fungus) protein is Endoribonuclease YSH1 (YSH1).